We begin with the raw amino-acid sequence, 940 residues long: Isoleucine--tRNA ligase (940 aa).

The 'HIGH' region signature appears at 58–68 (PYANGSIHIGH). Glu564 contributes to the L-isoleucyl-5'-AMP binding site. The 'KMSKS' region signature appears at 605 to 609 (KMSKS). Residue Lys608 participates in ATP binding. Positions 903, 906, 923, and 926 each coordinate Zn(2+).

Belongs to the class-I aminoacyl-tRNA synthetase family. IleS type 1 subfamily. In terms of assembly, monomer. Zn(2+) serves as cofactor.

Its subcellular location is the cytoplasm. The catalysed reaction is tRNA(Ile) + L-isoleucine + ATP = L-isoleucyl-tRNA(Ile) + AMP + diphosphate. Functionally, catalyzes the attachment of isoleucine to tRNA(Ile). As IleRS can inadvertently accommodate and process structurally similar amino acids such as valine, to avoid such errors it has two additional distinct tRNA(Ile)-dependent editing activities. One activity is designated as 'pretransfer' editing and involves the hydrolysis of activated Val-AMP. The other activity is designated 'posttransfer' editing and involves deacylation of mischarged Val-tRNA(Ile). The polypeptide is Isoleucine--tRNA ligase (Shewanella oneidensis (strain ATCC 700550 / JCM 31522 / CIP 106686 / LMG 19005 / NCIMB 14063 / MR-1)).